The chain runs to 380 residues: MAMNIRKTHPLIKIVNNSLIDLPTPSNISIWWNFGSLLGLCLIIQILTGLFLAMHYTADISSAFSSVAHICRDVNYGWLIRNTHANGASMFFICVYLHIARGLYYGSYLNKETWNIGVIILLLLMATAFVGYVLPWGQMSFWGATVITNLLSALPYIGDMLVQWIWGGFSVDSATLTRFFTFHFLLPFVIVALTMVHLLFLHEAGSNNPTGLISNMDKIPFHPYYSYKDLLGFFILLFFLTFLALFTPNLLTDAENFIPANPLVTPPHIKPEWYFLFAYAILRSIPNKLGGVLALAFSILILLLVPILHTSKQRSLTFRPISQLLFWLLVANTIILTWIGGQPVEQPFITIGQIASITYFSFFLILFPIAGWWENKMLNL.

4 helical membrane-spanning segments follow: residues 34 to 54 (FGSLLGLCLIIQILTGLFLAM), 78 to 99 (WLIRNTHANGASMFFICVYLHI), 114 to 134 (WNIGVIILLLLMATAFVGYVL), and 179 to 199 (FFTFHFLLPFVIVALTMVHLL). Heme b-binding residues include His-84 and His-98. Positions 183 and 197 each coordinate heme b. His-202 is an a ubiquinone binding site. A run of 4 helical transmembrane segments spans residues 227–247 (YKDLLGFFILLFFLTFLALFT), 289–309 (LGGVLALAFSILILLLVPILH), 321–341 (ISQLLFWLLVANTIILTWIGG), and 348–368 (FITIGQIASITYFSFFLILFP).

It belongs to the cytochrome b family. The cytochrome bc1 complex contains 3 respiratory subunits (MT-CYB, CYC1 and UQCRFS1), 2 core proteins (UQCRC1 and UQCRC2) and probably 6 low-molecular weight proteins. Heme b serves as cofactor.

It is found in the mitochondrion inner membrane. Functionally, component of the ubiquinol-cytochrome c reductase complex (complex III or cytochrome b-c1 complex) that is part of the mitochondrial respiratory chain. The b-c1 complex mediates electron transfer from ubiquinol to cytochrome c. Contributes to the generation of a proton gradient across the mitochondrial membrane that is then used for ATP synthesis. The polypeptide is Cytochrome b (mt-cyb) (Pastinachus sephen (Cowtail stingray)).